The primary structure comprises 86 residues: Small ribosomal subunit protein uS15 (86 aa).

The protein belongs to the universal ribosomal protein uS15 family. As to quaternary structure, part of the 30S ribosomal subunit. Forms a bridge to the 50S subunit in the 70S ribosome, contacting the 23S rRNA.

In terms of biological role, one of the primary rRNA binding proteins, it binds directly to 16S rRNA where it helps nucleate assembly of the platform of the 30S subunit by binding and bridging several RNA helices of the 16S rRNA. Functionally, forms an intersubunit bridge (bridge B4) with the 23S rRNA of the 50S subunit in the ribosome. This chain is Small ribosomal subunit protein uS15, found in Endomicrobium trichonymphae.